Here is a 291-residue protein sequence, read N- to C-terminus: N-acetylmannosamine kinase (291 aa).

ATP is bound by residues 5 to 12 (AIDIGGTK) and 132 to 139 (GVGGGVVS). Residues His-156, Cys-166, Cys-168, and Cys-173 each coordinate Zn(2+).

This sequence belongs to the ROK (NagC/XylR) family. NanK subfamily. In terms of assembly, homodimer.

The catalysed reaction is an N-acyl-D-mannosamine + ATP = an N-acyl-D-mannosamine 6-phosphate + ADP + H(+). The protein operates within amino-sugar metabolism; N-acetylneuraminate degradation; D-fructose 6-phosphate from N-acetylneuraminate: step 2/5. Functionally, catalyzes the phosphorylation of N-acetylmannosamine (ManNAc) to ManNAc-6-P. In Escherichia coli (strain SMS-3-5 / SECEC), this protein is N-acetylmannosamine kinase.